Consider the following 404-residue polypeptide: Exodeoxyribonuclease 7 large subunit (404 aa).

Belongs to the XseA family. As to quaternary structure, heterooligomer composed of large and small subunits.

It is found in the cytoplasm. The catalysed reaction is Exonucleolytic cleavage in either 5'- to 3'- or 3'- to 5'-direction to yield nucleoside 5'-phosphates.. In terms of biological role, bidirectionally degrades single-stranded DNA into large acid-insoluble oligonucleotides, which are then degraded further into small acid-soluble oligonucleotides. The chain is Exodeoxyribonuclease 7 large subunit from Caldanaerobacter subterraneus subsp. tengcongensis (strain DSM 15242 / JCM 11007 / NBRC 100824 / MB4) (Thermoanaerobacter tengcongensis).